A 458-amino-acid polypeptide reads, in one-letter code: Chromosomal replication initiator protein DnaA (458 aa).

The interval 1 to 79 is domain I, interacts with DnaA modulators; that stretch reads MSLAIWQECL…ENPNHSVKIR (79 aa). The interval 79–120 is domain II; the sequence is RLMVGNVSSVEKKPAKQIPTQAPLTNQPWEGESKAHRVPHKS. Residues 92–114 are disordered; that stretch reads PAKQIPTQAPLTNQPWEGESKAH. Residues 96-106 are compositionally biased toward polar residues; sequence IPTQAPLTNQP. The segment at 121–338 is domain III, AAA+ region; sequence NLIKKYTFDN…GAIANISAKA (218 aa). ATP is bound by residues glycine 165, glycine 167, lysine 168, and threonine 169. A domain IV, binds dsDNA region spans residues 339 to 458; it reads QFTGQGITIS…YKILIRTLSM (120 aa).

Belongs to the DnaA family. As to quaternary structure, oligomerizes as a right-handed, spiral filament on DNA at oriC.

It is found in the cytoplasm. Plays an essential role in the initiation and regulation of chromosomal replication. ATP-DnaA binds to the origin of replication (oriC) to initiate formation of the DNA replication initiation complex once per cell cycle. Binds the DnaA box (a 9 base pair repeat at the origin) and separates the double-stranded (ds)DNA. Forms a right-handed helical filament on oriC DNA; dsDNA binds to the exterior of the filament while single-stranded (ss)DNA is stabiized in the filament's interior. The ATP-DnaA-oriC complex binds and stabilizes one strand of the AT-rich DNA unwinding element (DUE), permitting loading of DNA polymerase. After initiation quickly degrades to an ADP-DnaA complex that is not apt for DNA replication. Binds acidic phospholipids. The chain is Chromosomal replication initiator protein DnaA from Psychromonas ingrahamii (strain DSM 17664 / CCUG 51855 / 37).